Here is a 268-residue protein sequence, read N- to C-terminus: Zinc finger protein SNAI2 (268 aa).

Residues methionine 1–serine 20 are SNAG domain. Positions serine 80–leucine 117 are disordered. C2H2-type zinc fingers lie at residues phenylalanine 128 to histidine 150, phenylalanine 159 to histidine 181, cysteine 185 to histidine 207, and phenylalanine 213 to histidine 235. Residues tyrosine 241 to cysteine 264 form a C2H2-type 5; atypical zinc finger.

It belongs to the snail C2H2-type zinc-finger protein family. As to quaternary structure, interacts (via SNAG domain) with LIMD1 (via LIM domains), WTIP (via LIM domains) and AJUBA (via LIM domains). Interacts (via zinc fingers) with KPNA2, KPNB1, and TNPO1. May interact (via zinc fingers) with IPO7. Post-translationally, phosphorylated by GSK3B. Once phosphorylated, it becomes a target for ubiquitination. Ubiquitinated by the SCF(FBXO11) complex; ubiquitination requires previous GSK3B-mediated SNAI2 phosphorylation. In terms of tissue distribution, expressed in most adult human tissues, including spleen, thymus, prostate, testis, ovary, small intestine, colon, heart, brain, placenta, lung, liver, skeletal muscle, kidney and pancreas. Not detected in peripheral blood leukocyte. Expressed in the dermis and in all layers of the epidermis, with high levels of expression in the basal layers (at protein level). Expressed in osteoblasts (at protein level). Expressed in mesenchymal stem cells (at protein level). Expressed in breast tumor cells (at protein level).

It localises to the nucleus. Its subcellular location is the cytoplasm. Transcriptional repressor that modulates both activator-dependent and basal transcription. Involved in the generation and migration of neural crest cells. Plays a role in mediating RAF1-induced transcriptional repression of the TJ protein, occludin (OCLN) and subsequent oncogenic transformation of epithelial cells. Represses BRCA2 expression by binding to its E2-box-containing silencer and recruiting CTBP1 and HDAC1 in breast cells. In epidermal keratinocytes, binds to the E-box in ITGA3 promoter and represses its transcription. Involved in the regulation of ITGB1 and ITGB4 expression and cell adhesion and proliferation in epidermal keratinocytes. Binds to E-box2 domain of BSG and activates its expression during TGFB1-induced epithelial-mesenchymal transition (EMT) in hepatocytes. Represses E-Cadherin/CDH1 transcription via E-box elements. Involved in osteoblast maturation. Binds to RUNX2 and SOC9 promoters and may act as a positive and negative transcription regulator, respectively, in osteoblasts. Binds to CXCL12 promoter via E-box regions in mesenchymal stem cells and osteoblasts. Plays an essential role in TWIST1-induced EMT and its ability to promote invasion and metastasis. In Homo sapiens (Human), this protein is Zinc finger protein SNAI2 (SNAI2).